The following is a 217-amino-acid chain: Ras-related protein Rab-39A (217 aa).

The GTP site is built by Ser-17, Gly-20, Lys-21, Ser-22, Cys-23, and Thr-44. Ser-22 contacts Mg(2+). Residues Pro-39–Val-47 form a switch-I region. Mg(2+) is bound by residues Thr-44 and Asp-68. 6 residues coordinate GTP: Gly-71, His-127, Lys-128, Asp-130, Ala-158, and Lys-159. The interval Gly-71 to Val-87 is switch-II. 2 S-geranylgeranyl cysteine lipidation sites follow: Cys-215 and Cys-217. Position 217 is a cysteine methyl ester (Cys-217).

Belongs to the small GTPase superfamily. Rab family. As to quaternary structure, interacts (GDP-bound) with C9orf72; C9orf72 acts as a GEF for RAB39A. Interacts (GTP-bound) with HOPS complex components VPS39 and VPS41, and STX17; interaction between HOPS components and RAB39A contributes to obtaining a functional HOPS complex that promotes membrane fusion driven by STX17-SNAP29-VAMP8. Interacts with BECN1. Probably associates with the PI3K (PI3KC3/PI3K-III/class III phosphatidylinositol 3-kinase) complex. Interacts with UACA. Interacts with isoform a of RASSF1. Does not interact with isoform c of RASSF1. The cofactor is Mg(2+). Prenylated. Prenylation is required for association with cellular membranes.

It localises to the cell membrane. The protein localises to the cytoplasmic vesicle. Its subcellular location is the phagosome membrane. It is found in the lysosome membrane. The protein resides in the autolysosome membrane. It catalyses the reaction GTP + H2O = GDP + phosphate + H(+). With respect to regulation, regulated by guanine nucleotide exchange factors (GEFs) including c9Orf72, which promote the exchange of bound GDP for free GTP. Regulated by GTPase activating proteins (GAPs) which increase the GTP hydrolysis activity. Inhibited by GDP dissociation inhibitors (GDIs). Its function is as follows. The small GTPases Rab are key regulators of intracellular membrane trafficking, from the formation of transport vesicles to their fusion with membranes. Rabs cycle between an inactive GDP-bound form and an active GTP-bound form that is able to recruit to membranes different sets of downstream effectors directly responsible for vesicle formation, movement, tethering and fusion. RAB39A regulates autophagosome-lysosome fusion via recruitment of the HOPS endosomal tethering complex onto lysosomes; this process involves lysosomal RAB39A and autophagosomal RAB2A recruitment of HOPS subcomplexes VPS41-VPS16-VPS18-VPS33A and VPS39-VPS11, respectively, which assemble into a functional complex to mediate membrane tethering and SNAREs-driven membrane fusion. Also negatively regulates lipopolysaccharide (LPS)-induced autophagosome formation in macrophages, possibly by implicating PI3K. Promotes the delivery of MHC-I molecules from the ER to phagosomes and the generation of peptide-loaded MHC-I complexes in phagosomes, thus enhancing antigen cross-presentation by dendritic cells. Plays a role in the maturation and acidification of phagosomes that engulf pathogens, such as S.aureus and M.tuberculosis. Plays a role in the fusion of phagosomes with lysosomes. May be involved in multiple neurite formation. The polypeptide is Ras-related protein Rab-39A (Homo sapiens (Human)).